Reading from the N-terminus, the 204-residue chain is Thiamine-phosphate synthase (204 aa).

4-amino-2-methyl-5-(diphosphooxymethyl)pyrimidine is bound by residues 35-39 (QVREK) and asparagine 67. Mg(2+) is bound by residues aspartate 68 and aspartate 87. Serine 106 serves as a coordination point for 4-amino-2-methyl-5-(diphosphooxymethyl)pyrimidine. Residue 132–134 (TPT) participates in 2-[(2R,5Z)-2-carboxy-4-methylthiazol-5(2H)-ylidene]ethyl phosphate binding. Position 135 (lysine 135) interacts with 4-amino-2-methyl-5-(diphosphooxymethyl)pyrimidine. 2-[(2R,5Z)-2-carboxy-4-methylthiazol-5(2H)-ylidene]ethyl phosphate contacts are provided by residues glycine 163 and 183–184 (VS).

It belongs to the thiamine-phosphate synthase family. Mg(2+) serves as cofactor.

The enzyme catalyses 2-[(2R,5Z)-2-carboxy-4-methylthiazol-5(2H)-ylidene]ethyl phosphate + 4-amino-2-methyl-5-(diphosphooxymethyl)pyrimidine + 2 H(+) = thiamine phosphate + CO2 + diphosphate. It catalyses the reaction 2-(2-carboxy-4-methylthiazol-5-yl)ethyl phosphate + 4-amino-2-methyl-5-(diphosphooxymethyl)pyrimidine + 2 H(+) = thiamine phosphate + CO2 + diphosphate. It carries out the reaction 4-methyl-5-(2-phosphooxyethyl)-thiazole + 4-amino-2-methyl-5-(diphosphooxymethyl)pyrimidine + H(+) = thiamine phosphate + diphosphate. It functions in the pathway cofactor biosynthesis; thiamine diphosphate biosynthesis; thiamine phosphate from 4-amino-2-methyl-5-diphosphomethylpyrimidine and 4-methyl-5-(2-phosphoethyl)-thiazole: step 1/1. Functionally, condenses 4-methyl-5-(beta-hydroxyethyl)thiazole monophosphate (THZ-P) and 2-methyl-4-amino-5-hydroxymethyl pyrimidine pyrophosphate (HMP-PP) to form thiamine monophosphate (TMP). The protein is Thiamine-phosphate synthase of Vibrio parahaemolyticus serotype O3:K6 (strain RIMD 2210633).